The chain runs to 235 residues: Octanoyltransferase (235 aa).

Positions 59–235 constitute a BPL/LPL catalytic domain; sequence PGSSQAVWLL…KKSLTERFGL (177 aa). Substrate-binding positions include 101-108, 168-170, and 181-183; these read RGGEVTHH, SIG, and GLS. Residue C199 is the Acyl-thioester intermediate of the active site.

It belongs to the LipB family.

The protein resides in the cytoplasm. It catalyses the reaction octanoyl-[ACP] + L-lysyl-[protein] = N(6)-octanoyl-L-lysyl-[protein] + holo-[ACP] + H(+). Its pathway is protein modification; protein lipoylation via endogenous pathway; protein N(6)-(lipoyl)lysine from octanoyl-[acyl-carrier-protein]: step 1/2. Functionally, catalyzes the transfer of endogenously produced octanoic acid from octanoyl-acyl-carrier-protein onto the lipoyl domains of lipoate-dependent enzymes. Lipoyl-ACP can also act as a substrate although octanoyl-ACP is likely to be the physiological substrate. In Prochlorococcus marinus (strain MIT 9211), this protein is Octanoyltransferase.